Here is a 267-residue protein sequence, read N- to C-terminus: Undecaprenyl-diphosphatase 2 (267 aa).

A run of 8 helical transmembrane segments spans residues 4-24 (IYFI…FLPI), 43-63 (EEKV…CWLF), 84-104 (FAVI…LFIH), 109-129 (VLFN…IILW), 147-167 (IGFK…IPGT), 186-206 (AATE…AIYD), 219-239 (ILAI…VVNA), and 243-263 (FVAK…GLII).

This sequence belongs to the UppP family.

It localises to the cell inner membrane. The enzyme catalyses di-trans,octa-cis-undecaprenyl diphosphate + H2O = di-trans,octa-cis-undecaprenyl phosphate + phosphate + H(+). Functionally, catalyzes the dephosphorylation of undecaprenyl diphosphate (UPP). Confers resistance to bacitracin. The polypeptide is Undecaprenyl-diphosphatase 2 (Shewanella oneidensis (strain ATCC 700550 / JCM 31522 / CIP 106686 / LMG 19005 / NCIMB 14063 / MR-1)).